Reading from the N-terminus, the 282-residue chain is Energy-coupling factor transporter ATP-binding protein EcfA1 (282 aa).

Residues Ile-6–Asp-243 enclose the ABC transporter domain. Gly-40 to Ser-47 serves as a coordination point for ATP.

This sequence belongs to the ABC transporter superfamily. Energy-coupling factor EcfA family. As to quaternary structure, forms a stable energy-coupling factor (ECF) transporter complex composed of 2 membrane-embedded substrate-binding proteins (S component), 2 ATP-binding proteins (A component) and 2 transmembrane proteins (T component).

Its subcellular location is the cell membrane. Its function is as follows. ATP-binding (A) component of a common energy-coupling factor (ECF) ABC-transporter complex. Unlike classic ABC transporters this ECF transporter provides the energy necessary to transport a number of different substrates. In Lactobacillus delbrueckii subsp. bulgaricus (strain ATCC BAA-365 / Lb-18), this protein is Energy-coupling factor transporter ATP-binding protein EcfA1.